The primary structure comprises 309 residues: 2-dehydro-3-deoxygluconokinase (309 aa).

Substrate is bound by residues 28-32 (GDTLN), Tyr88, 102-104 (YWR), and Arg170. ATP is bound by residues 168–170 (NYR), 228–233 (KRGADS), and 261–264 (AAGD). Position 264 (Asp264) interacts with substrate. The Proton acceptor role is filled by Asp264.

This sequence belongs to the carbohydrate kinase PfkB family.

The catalysed reaction is 2-dehydro-3-deoxy-D-gluconate + ATP = 2-dehydro-3-deoxy-6-phospho-D-gluconate + ADP + H(+). The protein operates within carbohydrate acid metabolism; 2-dehydro-3-deoxy-D-gluconate degradation; D-glyceraldehyde 3-phosphate and pyruvate from 2-dehydro-3-deoxy-D-gluconate: step 1/2. Its function is as follows. Catalyzes the phosphorylation of 2-keto-3-deoxygluconate (KDG) to produce 2-keto-3-deoxy-6-phosphogluconate (KDPG). The chain is 2-dehydro-3-deoxygluconokinase (kdgK) from Escherichia coli (strain K12).